The sequence spans 594 residues: Estrogen receptor (594 aa).

Residues Met-1 to Tyr-184 are modulating (transactivation AF-1); mediates interaction with MACROD1. Ser-10 carries O-linked (GlcNAc) serine glycosylation. Residues Leu-35 to Ser-47 are required for interaction with NCOA1. The tract at residues Leu-35–Met-174 is interaction with DDX5; self-association. Phosphoserine; by CDK2 is present on residues Ser-104 and Ser-106. A Phosphoserine modification is found at Ser-118. The segment at Pro-152–Ser-173 is disordered. Residues Ala-154–Leu-165 show a composition bias toward basic and acidic residues. Ser-167 carries the post-translational modification Phosphoserine; by CK2. NR C4-type zinc fingers lie at residues Cys-185–Cys-205 and Cys-221–Cys-245. A DNA-binding region (nuclear receptor) is located at residues Cys-185–Met-250. Residues Cys-185 to Leu-310 are mediates interaction with DNTTIP2. Positions Met-251–Leu-310 are hinge. Basic residues predominate over residues Lys-257–Arg-269. A disordered region spans residues Lys-257–Pro-293. Arg-260 is subject to Asymmetric dimethylarginine; by PRMT1. The tract at residues Gly-262–Ile-594 is interaction with AKAP13. The self-association stretch occupies residues Met-264 to Ile-594. Residues Gln-270–Pro-288 show a composition bias toward basic and acidic residues. Residues Thr-311–His-546 enclose the NR LBD domain. The tract at residues Thr-311–Ile-594 is transactivation AF-2. 17beta-estradiol is bound by residues Glu-353 and Arg-394. Cys-447 carries S-palmitoyl cysteine lipidation. Residue His-523 coordinates 17beta-estradiol. Phosphotyrosine; by Tyr-kinases is present on Tyr-536. The segment at Pro-551–Pro-575 is disordered. Polar residues predominate over residues Glu-561 to Pro-575. Thr-570 carries O-linked (GlcNAc) threonine glycosylation.

The protein belongs to the nuclear hormone receptor family. NR3 subfamily. As to quaternary structure, binds DNA as a homodimer. Can form a heterodimer with ESR2. Interacts with coactivator NCOA5. Interacts with PELP1, the interaction is enhanced by 17-beta-estradiol; the interaction increases ESR1 transcriptional activity. Interacts with NCOA7; the interaction is ligand-inducible. Interacts with AKAP13, CUEDC2, HEXIM1, KDM5A, MAP1S, SMARD1, and UBE1C. Interacts with MUC1; the interaction is stimulated by 7 beta-estradiol (E2) and enhances ESR1-mediated transcription. Interacts with DNTTIP2, and UIMC1. Interacts with KMT2D/MLL2. Interacts with ATAD2; the interaction is enhanced by estradiol. Interacts with KIF18A and LDB1. Interacts with RLIM (via its C-terminus). Interacts with MACROD1. Interacts with SH2D4A and PLCG. Interacts with SH2D4A; the interaction blocks binding to PLCG and inhibits estrogen-induced cell proliferation. Interacts with DYNLL1. Interacts with CCDC62; the interaction requires estradiol and appears to enhance the transcription of target genes. Interacts with NR2C1; the interaction prevents homodimerization of ESR1 and suppresses its transcriptional activity and cell growth. Interacts with DNAAF4. Interacts with PRMT2. Interacts with RBFOX2. Interacts with EP300; the interaction is estrogen-dependent and enhanced by CITED1. Interacts with CITED1; the interaction is estrogen-dependent. Interacts with FAM120B, FOXL2, PHB2 and SLC30A9. Interacts with coactivators NCOA3 and NCOA6. Interacts with STK3/MST2 only in the presence of SAV1 and vice-versa. Binds to CSNK1D. Interacts with NCOA2; NCOA2 can interact with ESR1 AF-1 and AF-2 domains simultaneously and mediate their transcriptional synergy. Interacts with DDX5. Interacts with NCOA1; the interaction seems to require a self-association of N-terminal and C-terminal regions. Interacts with ZNF366, DDX17, NFKB1, RELA, SP1 and SP3. Interacts with NRIP1. Interacts with GPER1; the interaction occurs in an estrogen-dependent manner. Interacts with CLOCK and the interaction is stimulated by estrogen. Interacts with TRIP4 (ufmylated); estrogen dependent. Interacts with LMTK3; the interaction phosphorylates ESR1 (in vitro) and protects it against proteasomal degradation. Interacts with CCAR2 (via N-terminus) in a ligand-independent manner. Interacts with ZFHX3. Interacts with SFR1 in a ligand-dependent and -independent manner. Interacts with DCAF13, LATS1 and DCAF1; regulates ESR1 ubiquitination and ubiquitin-mediated proteasomal degradation. Interacts (via DNA-binding domain) with POU4F2 (C-terminus); this interaction increases the estrogen receptor ESR1 transcriptional activity in a DNA- and ligand 17-beta-estradiol-independent manner. Interacts with ESRRB isoform 1. Interacts with UBE3A and WBP2. Interacts with GTF2B. Interacts with RBM39. In the absence of hormonal ligand, interacts with TACC1. Interacts with PI3KR1 or PI3KR2 and PTK2/FAK1. Interacts with SRC. Interacts with BAG1; the interaction is promoted in the absence of estradiol (17-beta-estradiol/E2). Interacts with and ubiquitinated by STUB1; the interaction is promoted in the absence of estradiol (17-beta-estradiol/E2). Interacts with NEDD8. Post-translationally, ubiquitinated; regulated by LATS1 via DCAF1 it leads to ESR1 proteasomal degradation. Deubiquitinated by OTUB1. Ubiquitinated by STUB1/CHIP; in the CA1 hippocampal region following loss of endogenous circulating estradiol (17-beta-estradiol/E2). Ubiquitinated by UBR5, leading to its degradation: UBR5 specifically recognizes and binds ligand-bound ESR1 when it is not associated with coactivators (NCOAs). In presence of NCOAs, the UBR5-degron is not accessible, preventing its ubiquitination and degradation. In terms of processing, phosphorylated by cyclin A/CDK2 and CK1. Phosphorylation probably enhances transcriptional activity. Dephosphorylation at Ser-118 by PPP5C inhibits its transactivation activity. Phosphorylated by LMTK3 (in vitro). Palmitoylated at Cys-447 by ZDHHC7 and ZDHHC21. Palmitoylation is required for plasma membrane targeting and for rapid intracellular signaling via ERK and AKT kinases and cAMP generation, but not for signaling mediated by the nuclear hormone receptor. Post-translationally, dimethylated by PRMT1 at Arg-260. The methylation may favor cytoplasmic localization. Demethylated by JMJD6 at Arg-260.

Its subcellular location is the nucleus. The protein localises to the cytoplasm. The protein resides in the golgi apparatus. It localises to the cell membrane. Nuclear hormone receptor. The steroid hormones and their receptors are involved in the regulation of eukaryotic gene expression and affect cellular proliferation and differentiation in target tissues. Ligand-dependent nuclear transactivation involves either direct homodimer binding to a palindromic estrogen response element (ERE) sequence or association with other DNA-binding transcription factors, such as AP-1/c-Jun, c-Fos, ATF-2, Sp1 and Sp3, to mediate ERE-independent signaling. Ligand binding induces a conformational change allowing subsequent or combinatorial association with multiprotein coactivator complexes through LXXLL motifs of their respective components. Mutual transrepression occurs between the estrogen receptor (ER) and NF-kappa-B in a cell-type specific manner. Decreases NF-kappa-B DNA-binding activity and inhibits NF-kappa-B-mediated transcription from the IL6 promoter and displace RELA/p65 and associated coregulators from the promoter. Recruited to the NF-kappa-B response element of the CCL2 and IL8 promoters and can displace CREBBP. Present with NF-kappa-B components RELA/p65 and NFKB1/p50 on ERE sequences. Can also act synergistically with NF-kappa-B to activate transcription involving respective recruitment adjacent response elements; the function involves CREBBP. Can activate the transcriptional activity of TFF1. Also mediates membrane-initiated estrogen signaling involving various kinase cascades. Essential for MTA1-mediated transcriptional regulation of BRCA1 and BCAS3. Maintains neuronal survival in response to ischemic reperfusion injury when in the presence of circulating estradiol (17-beta-estradiol/E2). This Equus caballus (Horse) protein is Estrogen receptor (ESR1).